The chain runs to 297 residues: Heme A synthase (297 aa).

At 1 to 6 the chain is on the cytoplasmic side; that stretch reads MHKRLK. Residues 7–27 form a helical membrane-spanning segment; sequence IYSVITSIGVLIVLLQGALVT. Residues 28–62 lie on the Extracellular side of the membrane; it reads KTGSGEGCGATWPLCFGEVIPTNPAIETIIEYSHR. A disulfide bridge connects residues Cys35 and Cys42. The active site involves Glu58. His61 is a binding site for heme o. The chain crosses the membrane as a helical span at residues 63 to 83; that stretch reads IVSGLVGAMIIILAIWAWKQL. Residues 84 to 93 are Cytoplasmic-facing; sequence KHMREAKALS. A helical transmembrane segment spans residues 94–114; sequence FAAVILIIFQGLLGAGAVVFG. At 115-118 the chain is on the extracellular side; that stretch reads QSKA. A helical transmembrane segment spans residues 119–139; the sequence is ILALHFGISAMSLAAVVLLTI. His123 is a heme o binding site. At 140–156 the chain is on the cytoplasmic side; it reads LAFEDGREHTMAPKVSR. The chain crosses the membrane as a helical span at residues 157 to 177; that stretch reads GFKYYVFFVITYCYAVIYSGA. Over 178-210 the chain is Extracellular; sequence YVKHSEATLACAGFPLCNGQIFPGLYGPVGAHY. Residues Cys188 and Cys194 are joined by a disulfide bond. A helical transmembrane segment spans residues 211–231; the sequence is FHRVVGTILLLFLLILMIWTL. His212 provides a ligand contact to heme b. The Cytoplasmic portion of the chain corresponds to 232–242; that stretch reads SRYRHYRVLTW. The chain crosses the membrane as a helical span at residues 243-263; it reads TAVLSFLLVVGQFISGISIVF. At 264 to 271 the chain is on the extracellular side; that stretch reads TQNALSVG. Residues 272 to 292 form a helical membrane-spanning segment; it reads LIHALIISILFSALSYMTMII. His274 contributes to the heme b binding site. At 293-297 the chain is on the cytoplasmic side; that stretch reads TRPSH.

Belongs to the COX15/CtaA family. Type 1 subfamily. Interacts with CtaB. Heme b is required as a cofactor.

The protein resides in the cell membrane. It carries out the reaction Fe(II)-heme o + 2 A + H2O = Fe(II)-heme a + 2 AH2. The protein operates within porphyrin-containing compound metabolism; heme A biosynthesis; heme A from heme O: step 1/1. Catalyzes the conversion of heme O to heme A by two successive hydroxylations of the methyl group at C8. The first hydroxylation forms heme I, the second hydroxylation results in an unstable dihydroxymethyl group, which spontaneously dehydrates, resulting in the formyl group of heme A. The protein is Heme A synthase of Alkalihalophilus pseudofirmus (strain ATCC BAA-2126 / JCM 17055 / OF4) (Bacillus pseudofirmus).